The chain runs to 480 residues: ATP-grasp enzyme ankG (480 aa).

Residues 1-30 are disordered; sequence MYQISLKATKSAAEPTSSTDASHDDRQVER. The span at 21 to 30 shows a compositional bias: basic and acidic residues; sequence ASHDDRQVER.

The catalysed reaction is NK13650 D + L-aspartate + ATP = NK13650 C + AMP + diphosphate + H(+). The enzyme catalyses NK13650 B + L-aspartate + ATP = NK13650 A + AMP + diphosphate + H(+). It participates in secondary metabolite biosynthesis. Functionally, ATP-grasp enzyme; part of the ank cluster that mediates the biosynthesis of NK13650 C, a highly modified cyclo-arginine-tyrosine dipeptide. AnkG catalyzes the last step of the pathway via amidation NK13650 D with L-Asp to produce NK13650 C. AnkG also amidates NK13650 B into NK13650 A. Within the pathway, the cyclodipeptide synthase ankA acts as the scaffold-generating enzyme and is responsible for formation of the cyclo-Arg-Tyr diketopiperazine (cRY) from L-Arg and L-Tyr. The ankA product cRY is desaturated by the cytochrome P450 monooxygenase ankB to yield a dehydro-cyclodipeptide intermediate. The FAD-dependent monooxygenase ankC then installs the m-OH, ankD catalyzes the attachment of L-homoserine, and ankE ligates citrate to the ankD product to yield NK13650 B. The O-methyltransferase ankF is responsible for methylation of the C-17 phenol group of NK13650 B to produce NK13650 D. Amidation of NK13650 D with L-Asp by ankG then leads to the production of NK13650 C, whereas amidation of NK13650 B produces NK13650 A. In Aspergillus thermomutatus (Neosartorya pseudofischeri), this protein is ATP-grasp enzyme ankG.